Consider the following 851-residue polypeptide: Receptor like protein kinase S.2 (851 aa).

The Protein kinase 1 domain occupies 117–436 (FSDELILGSG…LPSFKSHPLY (320 aa)). ATP-binding positions include 123-131 (LGSGGFGRV) and K146. The Proton acceptor role is filled by D248. Residues 448–471 (SATTTTTRTTMTTTTSTTSFNASS) form a disordered region. Residues 532–819 (FSDARRVAEV…SILDGSERFF (288 aa)) enclose the Protein kinase 2 domain. Residues 538 to 546 (VAEVDFGTA) and K560 contribute to the ATP site.

It belongs to the protein kinase superfamily. Ser/Thr protein kinase family.

The catalysed reaction is L-seryl-[protein] + ATP = O-phospho-L-seryl-[protein] + ADP + H(+). The enzyme catalyses L-threonyl-[protein] + ATP = O-phospho-L-threonyl-[protein] + ADP + H(+). The polypeptide is Receptor like protein kinase S.2 (LECRKS2) (Arabidopsis thaliana (Mouse-ear cress)).